Consider the following 235-residue polypeptide: Keratin-associated protein 4-16 (235 aa).

The tract at residues 1–132 (MCSSKMPCSP…CCCPCCCLRP (132 aa)) is 16 X 5 AA repeats of C-C-[GIKRQVHEML]-[SPTRV]-[STVQRCP]. 16 consecutive repeat copies span residues 23 to 27 (CCHPS), 28 to 32 (CCQTT), 33 to 37 (CCRTT), 48 to 52 (CCRPQ), 53 to 57 (CCHSV), 58 to 62 (CCQPT), 63 to 67 (CCRPS), 68 to 72 (CCQTT), 78 to 82 (CCHPS), 83 to 87 (CCVSS), 88 to 92 (CCRPQ), 93 to 97 (CCHSV), 103 to 107 (CCHPS), 108 to 112 (CCISS), 118 to 122 (CCESS), and 128 to 132 (CCLRP). The segment covering 203–224 (SPSPSLPSLSPPLPSPPLPSPH) has biased composition (pro residues). Residues 203–235 (SPSPSLPSLSPPLPSPPLPSPHFPSVNPKSMLQ) are disordered.

The protein belongs to the KRTAP type 4 family. In terms of assembly, interacts with hair keratins.

Its function is as follows. In the hair cortex, hair keratin intermediate filaments are embedded in an interfilamentous matrix, consisting of hair keratin-associated proteins (KRTAP), which are essential for the formation of a rigid and resistant hair shaft through their extensive disulfide bond cross-linking with abundant cysteine residues of hair keratins. The matrix proteins include the high-sulfur and high-glycine-tyrosine keratins. This Homo sapiens (Human) protein is Keratin-associated protein 4-16.